Reading from the N-terminus, the 359-residue chain is Probable dual-specificity RNA methyltransferase RlmN (359 aa).

Glutamate 91 serves as the catalytic Proton acceptor. The region spanning 97 to 335 (QHYGHSVCVT…CVVRQEHGTD (239 aa)) is the Radical SAM core domain. An intrachain disulfide couples cysteine 104 to cysteine 340. Residues cysteine 111, cysteine 115, and cysteine 118 each coordinate [4Fe-4S] cluster. S-adenosyl-L-methionine-binding positions include 163-164 (GE), serine 195, 218-220 (SLH), and asparagine 296. Catalysis depends on cysteine 340, which acts as the S-methylcysteine intermediate.

Belongs to the radical SAM superfamily. RlmN family. [4Fe-4S] cluster is required as a cofactor.

It is found in the cytoplasm. It catalyses the reaction adenosine(2503) in 23S rRNA + 2 reduced [2Fe-2S]-[ferredoxin] + 2 S-adenosyl-L-methionine = 2-methyladenosine(2503) in 23S rRNA + 5'-deoxyadenosine + L-methionine + 2 oxidized [2Fe-2S]-[ferredoxin] + S-adenosyl-L-homocysteine. It carries out the reaction adenosine(37) in tRNA + 2 reduced [2Fe-2S]-[ferredoxin] + 2 S-adenosyl-L-methionine = 2-methyladenosine(37) in tRNA + 5'-deoxyadenosine + L-methionine + 2 oxidized [2Fe-2S]-[ferredoxin] + S-adenosyl-L-homocysteine. Functionally, specifically methylates position 2 of adenine 2503 in 23S rRNA and position 2 of adenine 37 in tRNAs. This is Probable dual-specificity RNA methyltransferase RlmN from Streptococcus pyogenes serotype M12 (strain MGAS2096).